Here is a 355-residue protein sequence, read N- to C-terminus: Phospho-N-acetylmuramoyl-pentapeptide-transferase (355 aa).

10 consecutive transmembrane segments (helical) span residues 3 to 23 (GVLI…PWVI), 56 to 76 (VIIV…GIGF), 80 to 100 (GLLV…DDYI), 120 to 140 (AAVA…AGLL), 152 to 172 (TSLT…IAAT), 185 to 205 (LAAG…FWQF), 224 to 244 (PLDV…FLWW), 251 to 271 (IFMG…IAIV), 276 to 296 (LLLV…MIQV), and 330 to 350 (FWIV…AEFL).

It belongs to the glycosyltransferase 4 family. MraY subfamily. Mg(2+) serves as cofactor.

The protein localises to the cell membrane. The catalysed reaction is UDP-N-acetyl-alpha-D-muramoyl-L-alanyl-gamma-D-glutamyl-meso-2,6-diaminopimeloyl-D-alanyl-D-alanine + di-trans,octa-cis-undecaprenyl phosphate = di-trans,octa-cis-undecaprenyl diphospho-N-acetyl-alpha-D-muramoyl-L-alanyl-D-glutamyl-meso-2,6-diaminopimeloyl-D-alanyl-D-alanine + UMP. It functions in the pathway cell wall biogenesis; peptidoglycan biosynthesis. Its function is as follows. Catalyzes the initial step of the lipid cycle reactions in the biosynthesis of the cell wall peptidoglycan: transfers peptidoglycan precursor phospho-MurNAc-pentapeptide from UDP-MurNAc-pentapeptide onto the lipid carrier undecaprenyl phosphate, yielding undecaprenyl-pyrophosphoryl-MurNAc-pentapeptide, known as lipid I. This chain is Phospho-N-acetylmuramoyl-pentapeptide-transferase, found in Frankia alni (strain DSM 45986 / CECT 9034 / ACN14a).